A 94-amino-acid polypeptide reads, in one-letter code: Large ribosomal subunit protein bL25 (94 aa).

This sequence belongs to the bacterial ribosomal protein bL25 family. As to quaternary structure, part of the 50S ribosomal subunit; part of the 5S rRNA/L5/L18/L25 subcomplex. Contacts the 5S rRNA. Binds to the 5S rRNA independently of L5 and L18.

Functionally, this is one of the proteins that binds to the 5S RNA in the ribosome where it forms part of the central protuberance. The protein is Large ribosomal subunit protein bL25 of Pectobacterium carotovorum subsp. carotovorum (strain PC1).